A 311-amino-acid polypeptide reads, in one-letter code: Dehydrogenase/reductase SDR family member 7C (311 aa).

An N-terminal signal peptide occupies residues 1-18; it reads MGIMAVLMLPLLLLGVSG. The NAD(+) site is built by Ser-47, Leu-49, Tyr-191, Lys-195, and Ser-226. Tyr-191 functions as the Proton acceptor in the catalytic mechanism.

It belongs to the short-chain dehydrogenases/reductases (SDR) family. In terms of tissue distribution, expressed in skeletal muscle, cardiac muscle and skin.

The protein resides in the sarcoplasmic reticulum membrane. It catalyses the reaction all-trans-retinol + NAD(+) = all-trans-retinal + NADH + H(+). NADH-dependent oxidoreductase which catalyzes the oxidation of all-trans-retinol to all-trans-retinal. Plays a role in the regulation of cardiac and skeletal muscle metabolic functions. Maintains Ca(2+) intracellular homeostasis by repressing Ca(2+) release from the sarcoplasmic reticulum (SR) in myotubes, possibly through local alternations in NAD/NADH or retinol/retinal. Also plays a role in Ca(2+) homeostasis by controlling Ca(2+) overload in the cytosol and the SR in myotubes. Involved in glucose uptake into skeletal muscles and muscle performance by activating PI3K and mTORC2-mediated AKT1 phosphorylation signaling pathways, possibly through the action of its downstream catalytic product all-trans-retinoic acid. This is Dehydrogenase/reductase SDR family member 7C from Rattus norvegicus (Rat).